The chain runs to 315 residues: DNA-directed RNA polymerase subunit alpha (315 aa).

The alpha N-terminal domain (alpha-NTD) stretch occupies residues 1–228 (MIGMEKPKIE…EHLELFISLT (228 aa)). An alpha C-terminal domain (alpha-CTD) region spans residues 245–315 (RNKLMEMTIE…FGLSLRQPDD (71 aa)).

Belongs to the RNA polymerase alpha chain family. Homodimer. The RNAP catalytic core consists of 2 alpha, 1 beta, 1 beta' and 1 omega subunit. When a sigma factor is associated with the core the holoenzyme is formed, which can initiate transcription.

The catalysed reaction is RNA(n) + a ribonucleoside 5'-triphosphate = RNA(n+1) + diphosphate. Its function is as follows. DNA-dependent RNA polymerase catalyzes the transcription of DNA into RNA using the four ribonucleoside triphosphates as substrates. This Symbiobacterium thermophilum (strain DSM 24528 / JCM 14929 / IAM 14863 / T) protein is DNA-directed RNA polymerase subunit alpha.